The chain runs to 1025 residues: Beta-galactosidase (1025 aa).

2 residues coordinate substrate: Asn103 and Asp202. Asp202 contacts Na(+). Residues Glu417, His419, and Glu462 each contribute to the Mg(2+) site. Substrate is bound by residues Glu462 and 538–541 (EYAH). Residue Glu462 is the Proton donor of the active site. The Nucleophile role is filled by Glu538. Asn598 lines the Mg(2+) pocket. Na(+) is bound by residues Phe602 and Asn605. Substrate-binding residues include Asn605 and Trp1003.

Belongs to the glycosyl hydrolase 2 family. As to quaternary structure, homotetramer. Mg(2+) is required as a cofactor. It depends on Na(+) as a cofactor.

It carries out the reaction Hydrolysis of terminal non-reducing beta-D-galactose residues in beta-D-galactosides.. The protein is Beta-galactosidase of Citrobacter koseri (strain ATCC BAA-895 / CDC 4225-83 / SGSC4696).